Consider the following 212-residue polypeptide: uncharacterized protein (212 aa).

Positions 53, 74, and 97 each coordinate S-adenosyl-L-methionine.

Belongs to the methyltransferase superfamily. YrrT family.

In terms of biological role, could be a S-adenosyl-L-methionine-dependent methyltransferase. This is an uncharacterized protein from Bacillus cereus (strain ATCC 14579 / DSM 31 / CCUG 7414 / JCM 2152 / NBRC 15305 / NCIMB 9373 / NCTC 2599 / NRRL B-3711).